The sequence spans 297 residues: Iron/alpha-ketoglutarate-dependent dioxygenase ausU (297 aa).

Fe cation-binding residues include H130, D132, and H206.

The protein belongs to the PhyH family. In terms of assembly, homodimer. The cofactor is Fe cation.

It participates in secondary metabolite biosynthesis; terpenoid biosynthesis. In terms of biological role, iron/alpha-ketoglutarate-dependent dioxygenase; part of the gene cluster that mediates the biosynthesis of calidodehydroaustin, a fungal meroterpenoid. The first step of the pathway is the synthesis of 3,5-dimethylorsellinic acid by the polyketide synthase ausA. 3,5-dimethylorsellinic acid is then prenylated by the polyprenyl transferase ausN. Further epoxidation by the FAD-dependent monooxygenase ausM and cyclization by the probable terpene cyclase ausL lead to the formation of protoaustinoid A. Protoaustinoid A is then oxidized to spiro-lactone preaustinoid A3 by the combined action of the FAD-binding monooxygenases ausB and ausC, and the dioxygenase ausE. Acid-catalyzed keto-rearrangement and ring contraction of the tetraketide portion of preaustinoid A3 by ausJ lead to the formation of preaustinoid A4. The aldo-keto reductase ausK, with the help of ausH, is involved in the next step by transforming preaustinoid A4 into isoaustinone which is in turn hydroxylated by the P450 monooxygenase ausI to form austinolide. The cytochrome P450 monooxygenase ausG modifies austinolide to austinol. Austinol is further acetylated to austin by the O-acetyltransferase ausP, which spontaneously changes to dehydroaustin. The cytochrome P450 monooxygenase ausR then converts dehydroaustin is into 7-dehydrodehydroaustin. The hydroxylation catalyzed by ausR permits the O-acetyltransferase ausQ to add an additional acetyl group to the molecule, leading to the formation of acetoxydehydroaustin. The short chain dehydrogenase ausT catalyzes the reduction of the double bond present between carbon atoms 1 and 2 to convert 7-dehydrodehydroaustin into 1,2-dihydro-7-hydroxydehydroaustin. AusQ catalyzes not only an acetylation reaction but also the addition of the PKS ausV diketide product to 1,2-dihydro-7-hydroxydehydroaustin, forming precalidodehydroaustin. Finally, the iron/alpha-ketoglutarate-dependent dioxygenase converts precalidodehydroaustin into calidodehydroaustin. The polypeptide is Iron/alpha-ketoglutarate-dependent dioxygenase ausU (Aspergillus calidoustus).